A 166-amino-acid chain; its full sequence is Protein SprT (166 aa).

Positions A21–F160 constitute a SprT-like domain. H74 is a Zn(2+) binding site. The active site involves E75. Residue H78 coordinates Zn(2+).

It belongs to the SprT family. Zn(2+) is required as a cofactor.

The protein localises to the cytoplasm. This chain is Protein SprT, found in Vibrio atlanticus (strain LGP32) (Vibrio splendidus (strain Mel32)).